A 298-amino-acid chain; its full sequence is UDP-N-acetylenolpyruvoylglucosamine reductase (298 aa).

Residues Thr27–Glu191 enclose the FAD-binding PCMH-type domain. Residue Arg170 is part of the active site. Ser220 (proton donor) is an active-site residue. The active site involves Glu290.

This sequence belongs to the MurB family. FAD serves as cofactor.

The protein localises to the cytoplasm. It catalyses the reaction UDP-N-acetyl-alpha-D-muramate + NADP(+) = UDP-N-acetyl-3-O-(1-carboxyvinyl)-alpha-D-glucosamine + NADPH + H(+). It functions in the pathway cell wall biogenesis; peptidoglycan biosynthesis. Functionally, cell wall formation. The protein is UDP-N-acetylenolpyruvoylglucosamine reductase of Listeria innocua serovar 6a (strain ATCC BAA-680 / CLIP 11262).